The chain runs to 356 residues: Tyrosine recombinase XerS (356 aa).

Residues valine 16–threonine 121 form the Core-binding (CB) domain. Residues glycine 169–aspartate 354 enclose the Tyr recombinase domain. Residues arginine 210, lysine 234, histidine 306, arginine 309, and histidine 332 contribute to the active site. Tyrosine 341 serves as the catalytic O-(3'-phospho-DNA)-tyrosine intermediate.

It belongs to the 'phage' integrase family. XerS subfamily.

It is found in the cytoplasm. FtsK is required for recombination. Its function is as follows. Site-specific tyrosine recombinase, which acts by catalyzing the cutting and rejoining of the recombining DNA molecules. Essential to convert dimers of the bacterial chromosome into monomers to permit their segregation at cell division. Binds an atypical recombination dif site (difSL). Binds preferentially to the left arm and cooperatively to the right arm of difSL. The sequence is that of Tyrosine recombinase XerS from Lactococcus lactis subsp. cremoris (strain MG1363).